The sequence spans 192 residues: Probable GTP-binding protein EngB (192 aa).

In terms of domain architecture, EngB-type G spans 22–192 (NLPQIVIVGR…QVLSIFEKYA (171 aa)). Residues 30-37 (GRSNVGKS), 57-61 (GKTRG), 75-78 (DLPG), 142-145 (TKAD), and 173-175 (FSA) contribute to the GTP site. Residues serine 37 and threonine 59 each contribute to the Mg(2+) site.

This sequence belongs to the TRAFAC class TrmE-Era-EngA-EngB-Septin-like GTPase superfamily. EngB GTPase family. Mg(2+) is required as a cofactor.

In terms of biological role, necessary for normal cell division and for the maintenance of normal septation. This is Probable GTP-binding protein EngB from Thermoanaerobacter pseudethanolicus (strain ATCC 33223 / 39E) (Clostridium thermohydrosulfuricum).